Here is a 321-residue protein sequence, read N- to C-terminus: Protoheme IX farnesyltransferase (321 aa).

The next 10 helical transmembrane spans lie at 28 to 48 (VMSL…DPVH), 49 to 69 (PIVG…SGAL), 94 to 114 (VMPN…VFTL), 116 to 136 (IVAN…YVVI), 149 to 169 (IVIG…AATG), 176 to 196 (FILF…LALG), 222 to 242 (ILLY…LGFA), 247 to 267 (GMLS…VYIV), 277 to 297 (AKAL…EIVV), and 300 to 320 (LVPI…PGFF).

The protein belongs to the UbiA prenyltransferase family. Protoheme IX farnesyltransferase subfamily.

The protein resides in the cell inner membrane. It catalyses the reaction heme b + (2E,6E)-farnesyl diphosphate + H2O = Fe(II)-heme o + diphosphate. It participates in porphyrin-containing compound metabolism; heme O biosynthesis; heme O from protoheme: step 1/1. Converts heme B (protoheme IX) to heme O by substitution of the vinyl group on carbon 2 of heme B porphyrin ring with a hydroxyethyl farnesyl side group. In Beijerinckia indica subsp. indica (strain ATCC 9039 / DSM 1715 / NCIMB 8712), this protein is Protoheme IX farnesyltransferase.